Consider the following 447-residue polypeptide: Probable butyrate:acetyl-CoA coenzyme A-transferase (447 aa).

220-224 provides a ligand contact to CoA; that stretch reads GIGGT. Glu-245 acts as the 5-glutamyl coenzyme A thioester intermediate in catalysis. The CoA site is built by Ile-320 and Gly-343.

It belongs to the acetyl-CoA hydrolase/transferase family.

It is found in the cytoplasm. The catalysed reaction is butanoate + acetyl-CoA = butanoyl-CoA + acetate. Its pathway is lipid metabolism; butanoate metabolism. Functionally, coenzyme A-transferase that converts butyrate to butyryl-CoA. Involved in the syntrophic growth of S.wolfei on butyrate in cooperation with methanogens or an appropriate hydrogen-scavenging bacterium, as part of the butyrate oxidation pathway. This Syntrophomonas wolfei subsp. wolfei (strain DSM 2245B / Goettingen) protein is Probable butyrate:acetyl-CoA coenzyme A-transferase.